The chain runs to 257 residues: K88 minor fimbrial subunit FaeJ (257 aa).

The signal sequence occupies residues 1–26 (MLNIIHRLKSGMFPALFFLTSASVLA).

It localises to the fimbrium. Its function is as follows. K88 minor fimbrial subunit, plays an essential role in the biogenesis of the K88 fimbriae. Fimbriae (also called pili), are polar filaments radiating from the surface of the bacterium to a length of 0.5-1.5 micrometers and numbering 100-300 per cell. They enable bacteria to colonize the epithelium of specific host organs. This Escherichia coli protein is K88 minor fimbrial subunit FaeJ (faeJ).